Consider the following 47-residue polypeptide: Snake venom metalloproteinase jararafibrase-4 (47 aa).

In terms of domain architecture, Peptidase M12B spans R6–L47. Residue E9 coordinates Ca(2+).

It belongs to the venom metalloproteinase (M12B) family. Monomer. Zn(2+) is required as a cofactor. In terms of tissue distribution, expressed by the venom gland.

It is found in the secreted. Inhibited by 1,10-phenanthroline and EDTA. In terms of biological role, the metalloproteinase is a probable venom zinc protease that induces local hemorrhage in the skin of rats. Degrades type-IV collagen, gelatin, laminin and fibronectin. Has fibrinolytic activities. Has high hemagglutinating activity on red blood cells. Cleaves insulin B chain at 29-His-|-Leu-30, and 38-Ala-|-Leu-39 bonds. This Bothrops jararaca (Jararaca) protein is Snake venom metalloproteinase jararafibrase-4.